A 406-amino-acid chain; its full sequence is Glucose-1-phosphate adenylyltransferase (406 aa).

Alpha-D-glucose 1-phosphate is bound by residues tyrosine 100, glycine 165, 181-182, and serine 199; that span reads EK.

This sequence belongs to the bacterial/plant glucose-1-phosphate adenylyltransferase family. In terms of assembly, homotetramer.

It carries out the reaction alpha-D-glucose 1-phosphate + ATP + H(+) = ADP-alpha-D-glucose + diphosphate. Its pathway is glycan biosynthesis; glycogen biosynthesis. Its function is as follows. Involved in the biosynthesis of ADP-glucose, a building block required for the elongation reactions to produce glycogen. Catalyzes the reaction between ATP and alpha-D-glucose 1-phosphate (G1P) to produce pyrophosphate and ADP-Glc. The protein is Glucose-1-phosphate adenylyltransferase of Streptomyces avermitilis (strain ATCC 31267 / DSM 46492 / JCM 5070 / NBRC 14893 / NCIMB 12804 / NRRL 8165 / MA-4680).